We begin with the raw amino-acid sequence, 461 residues long: Fumarate hydratase class II (461 aa).

Substrate contacts are provided by residues 97–99, 127–130, 137–139, and threonine 185; these read SGT, HPND, and SSN. Histidine 186 functions as the Proton donor/acceptor in the catalytic mechanism. Serine 316 is a catalytic residue. Residues serine 317 and 322 to 324 contribute to the substrate site; that span reads KVN.

Belongs to the class-II fumarase/aspartase family. Fumarase subfamily. Homotetramer.

It is found in the cytoplasm. The catalysed reaction is (S)-malate = fumarate + H2O. The protein operates within carbohydrate metabolism; tricarboxylic acid cycle; (S)-malate from fumarate: step 1/1. Functionally, involved in the TCA cycle. Catalyzes the stereospecific interconversion of fumarate to L-malate. The sequence is that of Fumarate hydratase class II from Staphylococcus aureus (strain COL).